Here is a 120-residue protein sequence, read N- to C-terminus: NAD(P)H-quinone oxidoreductase subunit 3 (120 aa).

3 helical membrane-spanning segments follow: residues 1–21 (MFVLSGYEYLLGFFIICSLVP), 64–84 (MFALVFVVFDVETVFLYPWAV), and 89–109 (LGLLAFIEALVFIAILVVALV).

This sequence belongs to the complex I subunit 3 family. As to quaternary structure, NDH-1 can be composed of about 15 different subunits; different subcomplexes with different compositions have been identified which probably have different functions.

The protein resides in the cellular thylakoid membrane. It catalyses the reaction a plastoquinone + NADH + (n+1) H(+)(in) = a plastoquinol + NAD(+) + n H(+)(out). It carries out the reaction a plastoquinone + NADPH + (n+1) H(+)(in) = a plastoquinol + NADP(+) + n H(+)(out). Functionally, NDH-1 shuttles electrons from an unknown electron donor, via FMN and iron-sulfur (Fe-S) centers, to quinones in the respiratory and/or the photosynthetic chain. The immediate electron acceptor for the enzyme in this species is believed to be plastoquinone. Couples the redox reaction to proton translocation, and thus conserves the redox energy in a proton gradient. Cyanobacterial NDH-1 also plays a role in inorganic carbon-concentration. This chain is NAD(P)H-quinone oxidoreductase subunit 3, found in Nostoc punctiforme (strain ATCC 29133 / PCC 73102).